We begin with the raw amino-acid sequence, 571 residues long: Cyclic di-GMP phosphodiesterase TpdA (571 aa).

Helical transmembrane passes span 155–175 (IAWV…YAIN), 321–341 (VYYI…FLVI), and 395–415 (TLIS…AIYA). The EAL domain maps to 344–571 (HRSLQAFITY…HQGYFYPLHF (228 aa)).

The protein localises to the cell inner membrane. The catalysed reaction is 3',3'-c-di-GMP + H2O = 5'-phosphoguanylyl(3'-&gt;5')guanosine + H(+). Functionally, cyclic di-GMP phosphodiesterase that plays an important role in modulating the global c-di-GMP pool. Its ability to alter the c-di-GMP pool has an effect on swimming motility, swarming motility and biofilm formation, multicellular behaviors that are important for the survival and dissemination of this environmental pathogen. Exhibits a dual function, namely, c-di-GMP degradation and modulation of its own expression. The protein is Cyclic di-GMP phosphodiesterase TpdA of Vibrio parahaemolyticus serotype O3:K6 (strain RIMD 2210633).